Consider the following 209-residue polypeptide: Protein-L-isoaspartate O-methyltransferase (209 aa).

Residue S59 is part of the active site.

Belongs to the methyltransferase superfamily. L-isoaspartyl/D-aspartyl protein methyltransferase family.

It localises to the cytoplasm. It catalyses the reaction [protein]-L-isoaspartate + S-adenosyl-L-methionine = [protein]-L-isoaspartate alpha-methyl ester + S-adenosyl-L-homocysteine. Catalyzes the methyl esterification of L-isoaspartyl residues in peptides and proteins that result from spontaneous decomposition of normal L-aspartyl and L-asparaginyl residues. It plays a role in the repair and/or degradation of damaged proteins. The sequence is that of Protein-L-isoaspartate O-methyltransferase from Helicobacter pylori (strain P12).